An 883-amino-acid chain; its full sequence is Phosphoenolpyruvate carboxylase (883 aa).

Active-site residues include His138 and Lys546.

It belongs to the PEPCase type 1 family. The cofactor is Mg(2+).

It catalyses the reaction oxaloacetate + phosphate = phosphoenolpyruvate + hydrogencarbonate. Functionally, forms oxaloacetate, a four-carbon dicarboxylic acid source for the tricarboxylic acid cycle. This chain is Phosphoenolpyruvate carboxylase, found in Salmonella paratyphi A (strain ATCC 9150 / SARB42).